The following is a 362-amino-acid chain: Innexin-17 (362 aa).

The next 4 helical transmembrane spans lie at 27 to 47 (YFTV…QYVG), 101 to 121 (WVPF…VIWN), 189 to 209 (FLAT…MGLG), and 266 to 286 (LFIA…FDIF).

Belongs to the pannexin family.

It is found in the cell membrane. Its subcellular location is the cell junction. The protein localises to the gap junction. In terms of biological role, structural component of the gap junctions. In Caenorhabditis elegans, this protein is Innexin-17.